We begin with the raw amino-acid sequence, 187 residues long: NADH-quinone oxidoreductase subunit B (187 aa).

[4Fe-4S] cluster contacts are provided by Cys-55, Cys-56, Cys-121, and Cys-150.

Belongs to the complex I 20 kDa subunit family. NDH-1 is composed of 14 different subunits. Subunits NuoB, C, D, E, F, and G constitute the peripheral sector of the complex. The cofactor is [4Fe-4S] cluster.

It localises to the cell inner membrane. It catalyses the reaction a quinone + NADH + 5 H(+)(in) = a quinol + NAD(+) + 4 H(+)(out). NDH-1 shuttles electrons from NADH, via FMN and iron-sulfur (Fe-S) centers, to quinones in the respiratory chain. The immediate electron acceptor for the enzyme in this species is believed to be ubiquinone. Couples the redox reaction to proton translocation (for every two electrons transferred, four hydrogen ions are translocated across the cytoplasmic membrane), and thus conserves the redox energy in a proton gradient. This is NADH-quinone oxidoreductase subunit B from Bdellovibrio bacteriovorus (strain ATCC 15356 / DSM 50701 / NCIMB 9529 / HD100).